Here is a 621-residue protein sequence, read N- to C-terminus: MPLLRSSQHIKNTYWNIPKKSFRTGVPQFAESKKTRILHLHPLCKSASGVESPPFFDSQTFSSISNRKEFRKMATTVPQVVSLDPTTIPIDYHTPIDDLSIEVKDISAEACPADEGLIVFLLNSAPKHSSSGGSGGNGGSAGSSGNGEGGAQIKINSSVKDNTINEFLKEGNMENFTGKLGTSKSFYIANDQKKYVSLAYVGCGPANEETELEIRKVAYALVTLLHDSKHKKVSIIFEIKIEEALFRFFLEHLFYEYVTDERFKSADKSTETDFIKNLSLHIANADAYKGQIDKARVYFYGTYYAAQLIAAPSNYCNPVSLSNAAVELAQKVNLECKILDVKELEELKMGAYLSVGKGSMYPNKFIHLTYKGAQTGASQNEKKKIALIGKGITFDSGGYNLKAAPGSMIDLMKFDMSGCAAVLGCAYCIGTIKPDNVEVHFLSAVCENMVSKNSYRPGDIITASNGKTIEVGNTDAEGRLTLADALVYAEKLGVDYIVDIATLTGAMLYSLGTSYAGVFGNNDQLINKILSSSKTSNEPVWWLPIINEYRSSLNSKYADLNNISSSVKASSVVASLFLKEFIENTPWAHIDIAGVSWNFKARKPKGFGVRLLTEFVLNDAV.

Positions 1-73 are excised as a propeptide; that stretch reads MPLLRSSQHI…ISNRKEFRKM (73 aa). A disordered region spans residues 129-152; sequence SSSGGSGGNGGSAGSSGNGEGGAQ. Gly residues predominate over residues 132 to 150; it reads GGSGGNGGSAGSSGNGEGG. A peptide contacts are provided by Lys390, Asp395, and Lys402. 2 residues coordinate Zn(2+): Lys390 and Asp395. The interval 400-417 is L13 loop; sequence NLKAAPGSMIDLMKFDMS. The active site involves Lys402. Asp410, Met412, Asp415, Asp475, and Glu477 together coordinate Zn(2+). A peptide contacts are provided by Asp415 and Asp475. The active site involves Arg479.

This sequence belongs to the peptidase M17 family. Homohexamer composed of dimer of trimers. Both the identity and concentration of metal ions available dictate the extent to which oligomerization occurs; Mn(2+) and Co(2+) induces oligomerization, whereas Mg(2+) has no effect, and Zn(2+) causes irreversible protein aggregation in vitro. Zn(2+) serves as cofactor.

Its subcellular location is the cytoplasm. It catalyses the reaction Release of an N-terminal amino acid, Xaa-|-Yaa-, in which Xaa is preferably Leu, but may be other amino acids including Pro although not Arg or Lys, and Yaa may be Pro. Amino acid amides and methyl esters are also readily hydrolyzed, but rates on arylamides are exceedingly low.. The enzyme catalyses L-cysteinylglycine + H2O = L-cysteine + glycine. Its activity is regulated as follows. Oligomerization is required for catalytic activity and is metal-dependent. The type of metal that binds the 2 metal binding sites influences catalytic activity and substrate specificity. In vitro, activated by Co(2+), Mn(2+), Ni(2+), Mg(2+) and Zn(2+) with decreasing strength. Occupancy of the site 2 is essential and sufficient for activating the enzyme but occupation of the 2 sites is necessary for full catalytic activity. Inhibited by Ca(2+). Inhibited by fungal metabolite bestatin. In terms of biological role, aminopeptidase which preferentially cleaves leucine residues from the N-terminus of peptides. Also, has some activity towards tryptophan and methionine and has very low activity towards alanine, arginine, asparagine, phenylalanine and tyrosine. No activity towards histidine, serine, valine, isoleucine, glycine, aspartic acid and glutamic acid. In addition, cleaves the Cys-Gly dipeptide, probably as part of the glutathione regulation pathway; cleavage only occurs in the presence of Mn(2+). Plays a role in the final step of host hemoglobin catabolism, by cleaving hemoglobin-derived oligopeptides providing a source of amino acids for the parasite protein synthesis and for the maintenance of osmotic homeostasis. In Plasmodium vivax (strain Salvador I), this protein is Leucine aminopeptidase.